The following is a 369-amino-acid chain: Molybdenum import ATP-binding protein ModC (369 aa).

The region spanning leucine 4–alanine 239 is the ABC transporter domain. Position 31 to 38 (glycine 31 to serine 38) interacts with ATP. Residues histidine 293 to proline 361 form the Mop domain.

It belongs to the ABC transporter superfamily. Molybdate importer (TC 3.A.1.8) family. In terms of assembly, the complex is composed of two ATP-binding proteins (ModC), two transmembrane proteins (ModB) and a solute-binding protein (ModA).

The protein resides in the cell membrane. The enzyme catalyses molybdate(out) + ATP + H2O = molybdate(in) + ADP + phosphate + H(+). Its function is as follows. Part of the ABC transporter complex ModABC involved in molybdenum import. Responsible for energy coupling to the transport system. In Mycobacterium tuberculosis (strain CDC 1551 / Oshkosh), this protein is Molybdenum import ATP-binding protein ModC.